Consider the following 191-residue polypeptide: Peptidyl-tRNA hydrolase (191 aa).

Tyrosine 17 lines the tRNA pocket. Residue histidine 22 is the Proton acceptor of the active site. TRNA-binding residues include tyrosine 68, asparagine 70, and asparagine 116.

The protein belongs to the PTH family. Monomer.

The protein resides in the cytoplasm. It catalyses the reaction an N-acyl-L-alpha-aminoacyl-tRNA + H2O = an N-acyl-L-amino acid + a tRNA + H(+). Functionally, hydrolyzes ribosome-free peptidyl-tRNAs (with 1 or more amino acids incorporated), which drop off the ribosome during protein synthesis, or as a result of ribosome stalling. Catalyzes the release of premature peptidyl moieties from peptidyl-tRNA molecules trapped in stalled 50S ribosomal subunits, and thus maintains levels of free tRNAs and 50S ribosomes. The sequence is that of Peptidyl-tRNA hydrolase from Mycobacterium avium (strain 104).